The sequence spans 523 residues: Mitochondrial distribution and morphology protein 34 (523 aa).

Residues 1-200 (MSFKVNWKSL…LPTLIHQFSL (200 aa)) enclose the SMP-LTD domain. A disordered region spans residues 489–523 (ELSMDRSGKRKQRNYGSATYESENPIVAPPPPYSH).

The protein belongs to the MDM34 family. Component of the ER-mitochondria encounter structure (ERMES) or MDM complex, composed of MMM1, MDM10, MDM12 and MDM34.

The protein localises to the mitochondrion outer membrane. Component of the ERMES/MDM complex, which serves as a molecular tether to connect the endoplasmic reticulum (ER) and mitochondria. Components of this complex are involved in the control of mitochondrial shape and protein biogenesis, and function in nonvesicular lipid trafficking between the ER and mitochondria. MDM34 is required for the interaction of the ER-resident membrane protein MMM1 and the outer mitochondrial membrane-resident beta-barrel protein MDM10. The protein is Mitochondrial distribution and morphology protein 34 of Scheffersomyces stipitis (strain ATCC 58785 / CBS 6054 / NBRC 10063 / NRRL Y-11545) (Yeast).